The following is a 460-amino-acid chain: Argininosuccinate lyase (460 aa).

It belongs to the lyase 1 family. Argininosuccinate lyase subfamily.

It localises to the cytoplasm. The catalysed reaction is 2-(N(omega)-L-arginino)succinate = fumarate + L-arginine. Its pathway is amino-acid biosynthesis; L-arginine biosynthesis; L-arginine from L-ornithine and carbamoyl phosphate: step 3/3. The polypeptide is Argininosuccinate lyase (Streptococcus mutans serotype c (strain ATCC 700610 / UA159)).